We begin with the raw amino-acid sequence, 67 residues long: Protein AaeX (67 aa).

A run of 2 helical transmembrane segments spans residues 8-28 (VLFG…LPLF) and 47-67 (PALF…WLFI).

The protein belongs to the AaeX family.

Its subcellular location is the cell membrane. This chain is Protein AaeX, found in Edwardsiella piscicida.